Here is a 96-residue protein sequence, read N- to C-terminus: Acetolactate synthase isozyme 1 small subunit (96 aa).

Residues 10–83 form the ACT domain; that stretch reads ILELTVRNHP…DVVKVQRNQS (74 aa).

This sequence belongs to the acetolactate synthase small subunit family. As to quaternary structure, dimer of large and small chains.

The enzyme catalyses 2 pyruvate + H(+) = (2S)-2-acetolactate + CO2. It participates in amino-acid biosynthesis; L-isoleucine biosynthesis; L-isoleucine from 2-oxobutanoate: step 1/4. Its pathway is amino-acid biosynthesis; L-valine biosynthesis; L-valine from pyruvate: step 1/4. The sequence is that of Acetolactate synthase isozyme 1 small subunit (ilvN) from Escherichia coli O157:H7.